The primary structure comprises 152 residues: 3-hydroxyacyl-[acyl-carrier-protein] dehydratase FabZ (152 aa).

H58 is a catalytic residue.

The protein belongs to the thioester dehydratase family. FabZ subfamily.

The protein localises to the cytoplasm. It carries out the reaction a (3R)-hydroxyacyl-[ACP] = a (2E)-enoyl-[ACP] + H2O. Involved in unsaturated fatty acids biosynthesis. Catalyzes the dehydration of short chain beta-hydroxyacyl-ACPs and long chain saturated and unsaturated beta-hydroxyacyl-ACPs. The sequence is that of 3-hydroxyacyl-[acyl-carrier-protein] dehydratase FabZ from Prochlorococcus marinus (strain AS9601).